The following is a 483-amino-acid chain: UDP-N-acetylmuramoyl-L-alanyl-D-glutamate--2,6-diaminopimelate ligase 2 (483 aa).

Residue Ser30 participates in UDP-N-acetyl-alpha-D-muramoyl-L-alanyl-D-glutamate binding. 111–117 (GTNGKTT) provides a ligand contact to ATP. UDP-N-acetyl-alpha-D-muramoyl-L-alanyl-D-glutamate is bound by residues 156-157 (TT), Thr183, and Arg191. An N6-carboxylysine modification is found at Lys223. Meso-2,6-diaminopimelate is bound by residues Arg380, 404–407 (DNPR), Gly456, and Glu460. The Meso-diaminopimelate recognition motif motif lies at 404–407 (DNPR).

This sequence belongs to the MurCDEF family. MurE subfamily. Mg(2+) serves as cofactor. Carboxylation is probably crucial for Mg(2+) binding and, consequently, for the gamma-phosphate positioning of ATP.

The protein resides in the cytoplasm. The catalysed reaction is UDP-N-acetyl-alpha-D-muramoyl-L-alanyl-D-glutamate + meso-2,6-diaminopimelate + ATP = UDP-N-acetyl-alpha-D-muramoyl-L-alanyl-gamma-D-glutamyl-meso-2,6-diaminopimelate + ADP + phosphate + H(+). It functions in the pathway cell wall biogenesis; peptidoglycan biosynthesis. Functionally, catalyzes the addition of meso-diaminopimelic acid to the nucleotide precursor UDP-N-acetylmuramoyl-L-alanyl-D-glutamate (UMAG) in the biosynthesis of bacterial cell-wall peptidoglycan. The chain is UDP-N-acetylmuramoyl-L-alanyl-D-glutamate--2,6-diaminopimelate ligase 2 from Clostridium acetobutylicum (strain ATCC 824 / DSM 792 / JCM 1419 / IAM 19013 / LMG 5710 / NBRC 13948 / NRRL B-527 / VKM B-1787 / 2291 / W).